The sequence spans 2473 residues: Reducing polyketide synthase grgA (2473 aa).

Positions 15–446 (REPIAIVGSS…GTNAHAIIES (432 aa)) constitute a Ketosynthase family 3 (KS3) domain. Catalysis depends on for beta-ketoacyl synthase activity residues Cys-188, His-327, and His-366. Positions 559-882 (IFTGQGAQWA…SGVLKRGQNA (324 aa)) constitute a Malonyl-CoA:ACP transacylase (MAT) domain. The segment at 956 to 1099 (HELLGHSVTH…GGVRLWLGEP (144 aa)) is N-terminal hotdog fold. A dehydratase (DH) domain region spans residues 956–1260 (HELLGHSVTH…IHLSAVGQRR (305 aa)). The PKS/mFAS DH domain maps to 956–1262 (HELLGHSVTH…LSAVGQRRDP (307 aa)). The Proton acceptor; for dehydratase activity role is filled by His-990. The interval 1114 to 1262 (MEALDMEQLY…LSAVGQRRDP (149 aa)) is C-terminal hotdog fold. The Proton donor; for dehydratase activity role is filled by Asp-1172. The methyltransfrase (MT) domain stretch occupies residues 1300–1606 (TAYFYLRQLR…PSFCSVIVAQ (307 aa)). Positions 2108 to 2281 (TYLLCGMTGD…AGSVIHIAIL (174 aa)) constitute a Ketoreductase (KR) domain. The Carrier domain occupies 2388 to 2473 (AECLVILESC…LVEWRRLNKS (86 aa)). An O-(pantetheine 4'-phosphoryl)serine modification is found at Ser-2426.

The cofactor is pantetheine 4'-phosphate.

It participates in secondary metabolite biosynthesis. Functionally, reducing polyketide synthase; part of the gene cluster that mediates the biosynthesis of gregatin A, a fungal polyketide featuring an alkylated furanone core. The PKS grgA synthesizes C11 and C4 polyketide chains in the presence and absence of the trans-enoyl reductase grgB, respectively. The polyketide transferase grgF is then responsible for the fusion of the two carbon chains to produce the furanone skeleton of gregatin A. Next, the cytochrome P450 monooxygenase grgG accepts performs the oxidative cyclization to furnish the gregatin scaffold and leads to the formation of desmethylgregatin A. Finally, the O-methyltransferase grgD methylates the carboxyl group of desmethylgregatin A to provide gregatin A. The chain is Reducing polyketide synthase grgA from Penicillium sp.